Here is a 431-residue protein sequence, read N- to C-terminus: Serine/threonine-protein kinase PknA (431 aa).

Residues 1–339 (MSPRVGVTLS…RRTFSSGQRA (339 aa)) are Cytoplasmic-facing. In terms of domain architecture, Protein kinase spans 13–272 (YRLQRLIATG…SGGPFADAVA (260 aa)). ATP contacts are provided by residues 19 to 27 (IATGGMGQV) and Lys42. Asp141 serves as the catalytic Proton acceptor. The segment at 276 to 333 (AGRRPPRPSQTPPPGRAAPAAIPSGTTARVAANSAGRTAASRRSRPATGGHRPPRRTF) is disordered. Residues 282 to 291 (RPSQTPPPGR) show a composition bias toward pro residues. Positions 292 to 314 (AAPAAIPSGTTARVAANSAGRTA) are enriched in low complexity. A helical transmembrane segment spans residues 340–360 (LLWAAGVLGALAIIIAVLLVI). The Extracellular portion of the chain corresponds to 361–431 (KAPGDNSPQQ…ASLARYEIAQ (71 aa)). The tract at residues 366 to 418 (NSPQQAPTPTVTTTGNPPASNTGGTDASPRLNWTERGETRHSGLQSWVVPPTP) is disordered. A compositionally biased stretch (low complexity) spans 368-384 (PQQAPTPTVTTTGNPPA).

Belongs to the protein kinase superfamily. Ser/Thr protein kinase family. Post-translationally, autophosphorylated.

It localises to the cell membrane. It catalyses the reaction L-seryl-[protein] + ATP = O-phospho-L-seryl-[protein] + ADP + H(+). The enzyme catalyses L-threonyl-[protein] + ATP = O-phospho-L-threonyl-[protein] + ADP + H(+). In terms of biological role, protein kinase that regulates many aspects of mycobacterial physiology. Is a key component of a signal transduction pathway that regulates cell growth, cell shape and cell division via phosphorylation of target proteins. The protein is Serine/threonine-protein kinase PknA (pknA) of Mycobacterium bovis (strain ATCC BAA-935 / AF2122/97).